Consider the following 238-residue polypeptide: Triosephosphate isomerase (238 aa).

7–9 serves as a coordination point for substrate; the sequence is NFK. Residue His-91 is the Electrophile of the active site. Residue Glu-158 is the Proton acceptor of the active site. Residues Gly-164 and Ser-200 each coordinate substrate.

Belongs to the triosephosphate isomerase family. In terms of assembly, homodimer.

It is found in the cytoplasm. The catalysed reaction is D-glyceraldehyde 3-phosphate = dihydroxyacetone phosphate. The protein operates within carbohydrate biosynthesis; gluconeogenesis. It functions in the pathway carbohydrate degradation; glycolysis; D-glyceraldehyde 3-phosphate from glycerone phosphate: step 1/1. Functionally, involved in the gluconeogenesis. Catalyzes stereospecifically the conversion of dihydroxyacetone phosphate (DHAP) to D-glyceraldehyde-3-phosphate (G3P). The chain is Triosephosphate isomerase from Ureaplasma parvum serovar 3 (strain ATCC 27815 / 27 / NCTC 11736).